Reading from the N-terminus, the 229-residue chain is Urease accessory protein UreF (229 aa).

The protein belongs to the UreF family. As to quaternary structure, ureD, UreF and UreG form a complex that acts as a GTP-hydrolysis-dependent molecular chaperone, activating the urease apoprotein by helping to assemble the nickel containing metallocenter of UreC. The UreE protein probably delivers the nickel.

Its subcellular location is the cytoplasm. Required for maturation of urease via the functional incorporation of the urease nickel metallocenter. The protein is Urease accessory protein UreF of Alcanivorax borkumensis (strain ATCC 700651 / DSM 11573 / NCIMB 13689 / SK2).